The following is a 108-amino-acid chain: Insertion element IS6110 uncharacterized 12.0 kDa protein (108 aa).

Belongs to the transposase 8 family.

In Mycobacterium bovis (strain ATCC BAA-935 / AF2122/97), this protein is Insertion element IS6110 uncharacterized 12.0 kDa protein.